Consider the following 95-residue polypeptide: Acylphosphatase (95 aa).

The Acylphosphatase-like domain occupies 9–95 (RLTAWVHGRV…KGGLTGFVER (87 aa)). Catalysis depends on residues arginine 24 and asparagine 42.

This sequence belongs to the acylphosphatase family.

The enzyme catalyses an acyl phosphate + H2O = a carboxylate + phosphate + H(+). This Saccharopolyspora erythraea (strain ATCC 11635 / DSM 40517 / JCM 4748 / NBRC 13426 / NCIMB 8594 / NRRL 2338) protein is Acylphosphatase (acyP).